Consider the following 357-residue polypeptide: Selenide, water dikinase (357 aa).

The active site involves C25. Residues K28 and 57–59 (TAD) contribute to the ATP site. D60 contacts Mg(2+). ATP is bound by residues D77, D100, and 148 to 150 (GHS). D100 is a binding site for Mg(2+). Mg(2+) is bound at residue D236.

This sequence belongs to the selenophosphate synthase 1 family. Class I subfamily. Homodimer. Requires Mg(2+) as cofactor.

The enzyme catalyses hydrogenselenide + ATP + H2O = selenophosphate + AMP + phosphate + 2 H(+). Its function is as follows. Synthesizes selenophosphate from selenide and ATP. The protein is Selenide, water dikinase of Pseudomonas straminea.